We begin with the raw amino-acid sequence, 447 residues long: Probable glycine dehydrogenase (decarboxylating) subunit 1 (447 aa).

Belongs to the GcvP family. N-terminal subunit subfamily. As to quaternary structure, the glycine cleavage system is composed of four proteins: P, T, L and H. In this organism, the P 'protein' is a heterodimer of two subunits.

It carries out the reaction N(6)-[(R)-lipoyl]-L-lysyl-[glycine-cleavage complex H protein] + glycine + H(+) = N(6)-[(R)-S(8)-aminomethyldihydrolipoyl]-L-lysyl-[glycine-cleavage complex H protein] + CO2. Functionally, the glycine cleavage system catalyzes the degradation of glycine. The P protein binds the alpha-amino group of glycine through its pyridoxal phosphate cofactor; CO(2) is released and the remaining methylamine moiety is then transferred to the lipoamide cofactor of the H protein. The polypeptide is Probable glycine dehydrogenase (decarboxylating) subunit 1 (Beijerinckia indica subsp. indica (strain ATCC 9039 / DSM 1715 / NCIMB 8712)).